The following is a 436-amino-acid chain: GTPase Der (436 aa).

2 consecutive EngA-type G domains span residues 4–167 (PTIA…PNEE) and 175–351 (IKFS…QSQN). Residues 10–17 (GRPNVGKS), 57–61 (DTGGI), 119–122 (NKVD), 181–188 (GRPNVGKS), 229–233 (DTAGM), and 294–297 (NKWD) each bind GTP. The 85-residue stretch at 352-436 (TRIPSAVLND…PIHLIARKRK (85 aa)) folds into the KH-like domain.

It belongs to the TRAFAC class TrmE-Era-EngA-EngB-Septin-like GTPase superfamily. EngA (Der) GTPase family. Associates with the 50S ribosomal subunit.

Functionally, GTPase that plays an essential role in the late steps of ribosome biogenesis. The chain is GTPase Der from Streptococcus sanguinis (strain SK36).